Here is a 130-residue protein sequence, read N- to C-terminus: MARVTVEDCIDKVDNRFDLVLLAAHRARMISSGSQLTIDRDNDKNPVVSLREIAEETISPEDLREELVHSLQKFVEVDEPEPDTVPLIGSAGASVDADDTEVAPERMTEEELLKGLEGLAPPEEQPEEDE.

The interval 80 to 130 is disordered; the sequence is PEPDTVPLIGSAGASVDADDTEVAPERMTEEELLKGLEGLAPPEEQPEEDE. Positions 103–114 are enriched in basic and acidic residues; that stretch reads APERMTEEELLK.

This sequence belongs to the RNA polymerase subunit omega family. The RNAP catalytic core consists of 2 alpha, 1 beta, 1 beta' and 1 omega subunit. When a sigma factor is associated with the core the holoenzyme is formed, which can initiate transcription.

It catalyses the reaction RNA(n) + a ribonucleoside 5'-triphosphate = RNA(n+1) + diphosphate. In terms of biological role, promotes RNA polymerase assembly. Latches the N- and C-terminal regions of the beta' subunit thereby facilitating its interaction with the beta and alpha subunits. The chain is DNA-directed RNA polymerase subunit omega from Rhodopseudomonas palustris (strain BisB18).